We begin with the raw amino-acid sequence, 533 residues long: Flavin-containing monooxygenase 5 (533 aa).

Arg5 carries the dimethylated arginine modification. FAD-binding positions include 10–14 (GAGAS), Glu33, and 41–42 (LW). Ser54 is subject to Phosphoserine. Tyr56 is subject to Phosphotyrosine. Position 58 is a phosphoserine (Ser58). 62–63 (NT) contributes to the FAD binding site. An NADP(+)-binding site is contributed by 196–199 (SGGD). Ser280 is modified (phosphoserine). Thr284 carries the phosphothreonine modification. Ser401 is subject to Phosphoserine. The chain crosses the membrane as a helical span at residues 513-533 (MMTMGKFMLAIAFLAIAVVYF).

The protein belongs to the FMO family. Requires FAD as cofactor. As to expression, kidney and liver.

It localises to the microsome membrane. The protein localises to the endoplasmic reticulum membrane. It carries out the reaction N,N-dimethylaniline + NADPH + O2 + H(+) = N,N-dimethylaniline N-oxide + NADP(+) + H2O. The enzyme catalyses NADPH + O2 + H(+) = H2O2 + NADP(+). The catalysed reaction is heptan-2-one + NADPH + O2 + H(+) = pentyl acetate + NADP(+) + H2O. It catalyses the reaction octan-3-one + NADPH + O2 + H(+) = pentyl propanoate + NADP(+) + H2O. It carries out the reaction octan-3-one + NADPH + O2 + H(+) = ethyl hexanoate + NADP(+) + H2O. The enzyme catalyses hexan-3-one + NADPH + O2 + H(+) = ethyl butanoate + NADP(+) + H2O. The catalysed reaction is hexan-3-one + NADPH + O2 + H(+) = propyl propanoate + NADP(+) + H2O. It catalyses the reaction heptan-4-one + NADPH + O2 + H(+) = propyl butanoate + NADP(+) + H2O. It carries out the reaction (2E)-geranial + NADPH + O2 + H(+) = (1E)-2,6-dimethylhepta-1,5-dien-1-yl formate + NADP(+) + H2O. The enzyme catalyses sulcatone + NADPH + O2 + H(+) = 4-methylpent-3-en-1-yl acetate + NADP(+) + H2O. Acts as a Baeyer-Villiger monooxygenase on a broad range of substrates. Catalyzes the insertion of an oxygen atom into a carbon-carbon bond adjacent to a carbonyl, which converts ketones to esters. Active on diverse carbonyl compounds, whereas soft nucleophiles are mostly non- or poorly reactive. In contrast with other forms of FMO it is non- or poorly active on 'classical' substrates such as drugs, pesticides, and dietary components containing soft nucleophilic heteroatoms. Able to oxidize drug molecules bearing a carbonyl group on an aliphatic chain, such as nabumetone and pentoxifylline. Also, in the absence of substrates, shows slow but yet significant NADPH oxidase activity. Acts as a positive modulator of cholesterol biosynthesis as well as glucose homeostasis, promoting metabolic aging via pleiotropic effects. In Oryctolagus cuniculus (Rabbit), this protein is Flavin-containing monooxygenase 5 (FMO5).